A 99-amino-acid chain; its full sequence is Integration host factor subunit alpha (99 aa).

Positions 49–75 (FGNFDLRDKNQRPGRNPKTGEDIPITA) are disordered.

This sequence belongs to the bacterial histone-like protein family. As to quaternary structure, heterodimer of an alpha and a beta chain.

Its function is as follows. This protein is one of the two subunits of integration host factor, a specific DNA-binding protein that functions in genetic recombination as well as in transcriptional and translational control. The sequence is that of Integration host factor subunit alpha from Klebsiella pneumoniae (strain 342).